The chain runs to 1129 residues: SMC5-SMC6 complex localization factor protein 2 (1129 aa).

3 disordered regions span residues 71–178 (VKAR…SILN), 312–343 (NTSS…TEQA), and 955–1057 (MLYD…QLEG). Residues 72-87 (KARRHTLPHSSHRRSP) show a composition bias toward basic residues. Residues 93 to 110 (LLFQQRPRNSSGQFTHNP) are compositionally biased toward polar residues. Composition is skewed to basic and acidic residues over residues 112–130 (QKKD…KKEL) and 149–166 (RKSE…RPRV). 2 stretches are compositionally biased toward polar residues: residues 169–178 (QATSSSSILN) and 324–343 (TGRS…TEQA). Acidic residues-rich tracts occupy residues 999-1014 (ESEE…EEDW) and 1033-1048 (SAED…EEES).

The protein belongs to the FAM178 family.

It localises to the nucleus. Its function is as follows. Plays a role in the DNA damage response (DDR) pathway by regulating postreplication repair of UV-damaged DNA and genomic stability maintenance. Promotes the recruitment of the SMC5-SMC6 complex to DNA lesions. This chain is SMC5-SMC6 complex localization factor protein 2 (slf2), found in Danio rerio (Zebrafish).